The chain runs to 272 residues: Putative MgpC-like protein MPN_366 (272 aa).

Disordered regions lie at residues 65–84 (QESQ…TSGS) and 171–196 (GSGQ…PMPS). A compositionally biased stretch (low complexity) spans 72–84 (NGSQSGSSDTSGS). Residues 173–187 (GQESSWNSQRSQKGL) show a composition bias toward polar residues.

This sequence belongs to the MgpC family.

This Mycoplasma pneumoniae (strain ATCC 29342 / M129 / Subtype 1) (Mycoplasmoides pneumoniae) protein is Putative MgpC-like protein MPN_366.